Consider the following 253-residue polypeptide: Probable transcriptional regulatory protein RPR_05505 (253 aa).

It belongs to the TACO1 family.

The protein resides in the cytoplasm. This chain is Probable transcriptional regulatory protein RPR_05505, found in Rickettsia peacockii (strain Rustic).